Consider the following 259-residue polypeptide: Chloroplastic group IIB intron splicing facilitator CRS2, chloroplastic (259 aa).

The disordered stretch occupies residues M1–P21. The N-terminal 49 residues, M1 to V49, are a transit peptide targeting the chloroplast. Y77 provides a ligand contact to tRNA. H82 serves as the catalytic Proton acceptor. 3 residues coordinate tRNA: Y127, N129, and N175.

It belongs to the PTH family. CRS2 subfamily. Part of large ribonucleo-protein complexes that include group IIB introns and either CAF1 or CAF2.

It is found in the plastid. It localises to the chloroplast stroma. Required for the splicing of group IIB introns in chloroplasts. This is Chloroplastic group IIB intron splicing facilitator CRS2, chloroplastic from Oryza sativa subsp. japonica (Rice).